Here is a 257-residue protein sequence, read N- to C-terminus: NH(3)-dependent NAD(+) synthetase (257 aa).

28–35 provides a ligand contact to ATP; the sequence is GISGGVDS. Asp-34 serves as a coordination point for Mg(2+). Arg-109 is a deamido-NAD(+) binding site. Thr-129 lines the ATP pocket. Residue Glu-134 coordinates Mg(2+). Lys-142 and Asp-149 together coordinate deamido-NAD(+). 2 residues coordinate ATP: Lys-158 and Ser-180. Deamido-NAD(+) is bound at residue 240 to 241; sequence HK.

It belongs to the NAD synthetase family. In terms of assembly, homodimer.

It carries out the reaction deamido-NAD(+) + NH4(+) + ATP = AMP + diphosphate + NAD(+) + H(+). It participates in cofactor biosynthesis; NAD(+) biosynthesis; NAD(+) from deamido-NAD(+) (ammonia route): step 1/1. Its function is as follows. Catalyzes the ATP-dependent amidation of deamido-NAD to form NAD. Uses ammonia as a nitrogen source. The polypeptide is NH(3)-dependent NAD(+) synthetase (Pyrococcus horikoshii (strain ATCC 700860 / DSM 12428 / JCM 9974 / NBRC 100139 / OT-3)).